A 604-amino-acid chain; its full sequence is Elongation factor 4 (604 aa).

Residues 7–189 (KNIRNFCIIA…QIVTKIPAPS (183 aa)) form the tr-type G domain. Residues 19–24 (DHGKST) and 136–139 (NKID) each bind GTP.

Belongs to the TRAFAC class translation factor GTPase superfamily. Classic translation factor GTPase family. LepA subfamily.

The protein resides in the cell membrane. The enzyme catalyses GTP + H2O = GDP + phosphate + H(+). Its function is as follows. Required for accurate and efficient protein synthesis under certain stress conditions. May act as a fidelity factor of the translation reaction, by catalyzing a one-codon backward translocation of tRNAs on improperly translocated ribosomes. Back-translocation proceeds from a post-translocation (POST) complex to a pre-translocation (PRE) complex, thus giving elongation factor G a second chance to translocate the tRNAs correctly. Binds to ribosomes in a GTP-dependent manner. The polypeptide is Elongation factor 4 (Lachnospira eligens (strain ATCC 27750 / DSM 3376 / VPI C15-48 / C15-B4) (Eubacterium eligens)).